Reading from the N-terminus, the 477-residue chain is Glycogen synthase (477 aa).

K15 contributes to the ADP-alpha-D-glucose binding site.

It belongs to the glycosyltransferase 1 family. Bacterial/plant glycogen synthase subfamily.

It carries out the reaction [(1-&gt;4)-alpha-D-glucosyl](n) + ADP-alpha-D-glucose = [(1-&gt;4)-alpha-D-glucosyl](n+1) + ADP + H(+). The protein operates within glycan biosynthesis; glycogen biosynthesis. Synthesizes alpha-1,4-glucan chains using ADP-glucose. This Glaesserella parasuis serovar 5 (strain SH0165) (Haemophilus parasuis) protein is Glycogen synthase.